A 320-amino-acid chain; its full sequence is MPSISVRRLFDDNQYKLQLAWAAGNSGADNRIGVEADKPVLALVGHLNFIHPNQIQVVGLAESEYLNRLESGETGYQFGDLFDISMSLVIVANGLPVSPGLRDYCHKNDIPLLTSKLESPYLMDVLRIYLQRTLAASSVKHGVFLDVFEIGVLITGHSGLGKSELALELISRGHSLIADDAVELFRIGPETLEGRCSPMLRDFLEVRGLGILNIRHIFGETSIRPKKILQLIINLVEADDEYMKQLDRLSIRTETESILNVNVRSVTLPVAVGRNLAVLVEAAVRNYILQLRGKDSTREFLERHQTQLKENEQHNEDRPD.

Catalysis depends on residues His141 and Lys162. Residue 156–163 (GHSGLGKS) coordinates ATP. A Mg(2+)-binding site is contributed by Ser163. Asp180 functions as the Proton acceptor; for phosphorylation activity. Proton donor; for dephosphorylation activity in the catalytic mechanism. The interval 204–213 (LEVRGLGILN) is important for the catalytic mechanism of both phosphorylation and dephosphorylation. Residue Glu205 participates in Mg(2+) binding. Residue Arg248 is part of the active site. Residues 269–274 (PVAVGR) are important for the catalytic mechanism of dephosphorylation.

Belongs to the HPrK/P family. Homohexamer. The cofactor is Mg(2+).

It catalyses the reaction [HPr protein]-L-serine + ATP = [HPr protein]-O-phospho-L-serine + ADP + H(+). The catalysed reaction is [HPr protein]-O-phospho-L-serine + phosphate + H(+) = [HPr protein]-L-serine + diphosphate. Its function is as follows. Catalyzes the ATP- as well as the pyrophosphate-dependent phosphorylation of a specific serine residue in HPr, a phosphocarrier protein of the phosphoenolpyruvate-dependent sugar phosphotransferase system (PTS). HprK/P also catalyzes the pyrophosphate-producing, inorganic phosphate-dependent dephosphorylation (phosphorolysis) of seryl-phosphorylated HPr (P-Ser-HPr). This is HPr kinase/phosphorylase from Neisseria meningitidis serogroup B (strain ATCC BAA-335 / MC58).